The chain runs to 207 residues: Outer-membrane lipoprotein LolB (207 aa).

The signal sequence occupies residues 1–21 (MPLPDFRFIRLLPLAALVLTA). A lipid anchor (N-palmitoyl cysteine) is attached at C22. The S-diacylglycerol cysteine moiety is linked to residue C22.

This sequence belongs to the LolB family. As to quaternary structure, monomer.

The protein resides in the cell outer membrane. In terms of biological role, plays a critical role in the incorporation of lipoproteins in the outer membrane after they are released by the LolA protein. This is Outer-membrane lipoprotein LolB from Escherichia coli O6:K15:H31 (strain 536 / UPEC).